An 883-amino-acid chain; its full sequence is Phosphoenolpyruvate carboxylase (883 aa).

Residues His-138 and Lys-546 contribute to the active site.

The protein belongs to the PEPCase type 1 family. It depends on Mg(2+) as a cofactor.

It catalyses the reaction oxaloacetate + phosphate = phosphoenolpyruvate + hydrogencarbonate. Its function is as follows. Forms oxaloacetate, a four-carbon dicarboxylic acid source for the tricarboxylic acid cycle. This chain is Phosphoenolpyruvate carboxylase, found in Salmonella dublin (strain CT_02021853).